The sequence spans 161 residues: Small ribosomal subunit protein uS8m (161 aa).

This sequence belongs to the universal ribosomal protein uS8 family. As to quaternary structure, component of the mitochondrial small ribosomal subunit (mt-SSU). Mature N.crassa 74S mitochondrial ribosomes consist of a small (37S) and a large (54S) subunit. The 37S small subunit contains a 16S ribosomal RNA (16S mt-rRNA) and 32 different proteins. The 54S large subunit contains a 23S rRNA (23S mt-rRNA) and 42 different proteins.

Its subcellular location is the mitochondrion. Functionally, component of the mitochondrial ribosome (mitoribosome), a dedicated translation machinery responsible for the synthesis of mitochondrial genome-encoded proteins, including at least some of the essential transmembrane subunits of the mitochondrial respiratory chain. The mitoribosomes are attached to the mitochondrial inner membrane and translation products are cotranslationally integrated into the membrane. The chain is Small ribosomal subunit protein uS8m (mrps8) from Neurospora crassa (strain ATCC 24698 / 74-OR23-1A / CBS 708.71 / DSM 1257 / FGSC 987).